A 427-amino-acid chain; its full sequence is UDP-N-acetylglucosamine 1-carboxyvinyltransferase 2 (427 aa).

19–20 (KN) contributes to the phosphoenolpyruvate binding site. Residue Arg91 coordinates UDP-N-acetyl-alpha-D-glucosamine. Cys115 functions as the Proton donor in the catalytic mechanism. Cys115 is subject to 2-(S-cysteinyl)pyruvic acid O-phosphothioketal. UDP-N-acetyl-alpha-D-glucosamine contacts are provided by Asp307 and Val329.

The protein belongs to the EPSP synthase family. MurA subfamily.

The protein resides in the cytoplasm. It catalyses the reaction phosphoenolpyruvate + UDP-N-acetyl-alpha-D-glucosamine = UDP-N-acetyl-3-O-(1-carboxyvinyl)-alpha-D-glucosamine + phosphate. It functions in the pathway cell wall biogenesis; peptidoglycan biosynthesis. Functionally, cell wall formation. Adds enolpyruvyl to UDP-N-acetylglucosamine. This chain is UDP-N-acetylglucosamine 1-carboxyvinyltransferase 2, found in Prochlorococcus marinus (strain SARG / CCMP1375 / SS120).